Here is a 275-residue protein sequence, read N- to C-terminus: HUWE1-associated protein modifying stress responses (275 aa).

Acidic residues predominate over residues 32 to 44; the sequence is AEQDEQLSPELQE. Disordered stretches follow at residues 32–51, 155–181, 204–228, and 250–275; these read AEQDEQLSPELQEEAAAAAQ, RNSRAPPRLTVVSPNRATSTETSSSVE, SVRSSTPGSPTHVSSGPNASRRRNG, and GTRKRTSAQCGDVITDSPTHKRNRML. Ser-167 bears the Phosphoserine mark. Residues 172–181 show a composition bias toward low complexity; sequence TSTETSSSVE. The span at 204 to 221 shows a compositional bias: polar residues; sequence SVRSSTPGSPTHVSSGPN. Ser-212 is subject to Phosphoserine.

It belongs to the HAPSTR1 family. As to quaternary structure, homooligomer. Heterooligomer with HAPSTR2; the interaction is direct and stabilizes HAPSTR1. Interacts with HUWE1. In terms of processing, ubiquitinated by HUWE1. Promotes HAPSTR1 degradation through polyubiquitination.

Its subcellular location is the nucleus. It is found in the cytoplasm. Acts as a central player within a network of stress response pathways promoting cellular adaptability. The E3 ligase HUWE1 assists HAPSTR1 in controlling stress signaling and in turn, HUWE1 feeds back to promote the degradation of HAPSTR1. HAPSTR1 represents a central coordination mechanism for stress response programs. Functions as a negative regulator of TP53/P53 in the cellular response to telomere erosion and probably also DNA damage. May attenuate p53/TP53 activation through the E3 ubiquitin ligase HUWE1. This Mus musculus (Mouse) protein is HUWE1-associated protein modifying stress responses.